The sequence spans 87 residues: U3-theraphotoxin-Cg1b (87 aa).

The signal sequence occupies residues 1–23 (MRTLTLIAIVTCAALVIFHAAAA). A propeptide spanning residues 24 to 48 (EELEAQDVIQPEDIFTGVATLEEDR) is cleaved from the precursor. Intrachain disulfides connect Cys52-Cys65, Cys56-Cys79, and Cys73-Cys84.

This sequence belongs to the neurotoxin 12 (Hwtx-2) family. 03 (juruin) subfamily. As to expression, expressed by the venom gland.

Its subcellular location is the secreted. Probable ion channel inhibitor. In Chilobrachys guangxiensis (Chinese earth tiger tarantula), this protein is U3-theraphotoxin-Cg1b.